We begin with the raw amino-acid sequence, 267 residues long: DNA repair protein RecO (267 aa).

It belongs to the RecO family.

Involved in DNA repair and RecF pathway recombination. This is DNA repair protein RecO from Prochlorococcus marinus (strain MIT 9313).